A 371-amino-acid chain; its full sequence is Monomethylxanthine methyltransferase 2 (371 aa).

S-adenosyl-L-homocysteine is bound by residues tyrosine 18, cysteine 61, asparagine 66, aspartate 100, leucine 101, serine 139, phenylalanine 140, and cysteine 156. Theobromine contacts are provided by tyrosine 157, histidine 160, and tryptophan 161. Mg(2+) contacts are provided by asparagine 178, aspartate 260, phenylalanine 262, and asparagine 263. Tyrosine 355 lines the theobromine pocket.

This sequence belongs to the methyltransferase superfamily. Type-7 methyltransferase family. The cofactor is Mg(2+).

It carries out the reaction 7-methylxanthine + S-adenosyl-L-methionine = theobromine + S-adenosyl-L-homocysteine + H(+). The protein operates within alkaloid biosynthesis. In terms of biological role, involved in the biosynthesis of caffeine. Catalyzes the conversion of 7-methylxanthine (7mX) to theobromine and with a lower activity of paraxanthine to caffeine. In Coffea canephora (Robusta coffee), this protein is Monomethylxanthine methyltransferase 2.